Consider the following 699-residue polypeptide: MSKINKLEHIRNIGICAHIDAGKTTTTERILYYTGKSHKIGEVHEGGATMDWMEQEQERGITITSAATTCRWQDKIINIIDTPGHVDFTIEVERSLRVLDGAVAVFDGVAGVEPQSETVWRQADKYNVPRMCFVNKMDRMGADFYRCVEMLKDRLGAKPLVIQLPVGIEENFKGIIDLIKMKAVIWKDEALGAEYFEEDIPADMKDKAEEYRAKLLDMVVELDDHVMEKYLSGEEVTAEEIKRLIRKGTISAAFYPVLCGSAFKNKGVQPLLDAVVDFLPSPIDIGIVKGMEVSTGEEKDFPISVTEPFAALAFKIMNDPFVGSLTFIRIYSGKITSGTTVINTVKNKREKIGRMLLMHANNREDVKEASAGDIVALAGLKDTTTGDTLSDIDQQVILERMEFPEPVIELAVEPKSTADQEKMGLALSRLAAEDPSFRVSTDYETGQTVIKGMGELHLEIIIDRMRREFKVEANIGAPQVAYRETITKVCEIDYTHKKQSGGAGQFARVKIIFEPLKEVKDLKDEDKNKIFVFESKIIGGAVPKEYIPGVEKGLNNIRETGVIAGYPMIDFKATLVDGAFHDVDSSVLAFEIAAKAAFREGMPKGNPKLLEPIMQVEVITPDEYMGDIIGDLNSRRGQIQSMDPRGNAQVVTANVPLAEMFGYVNTLRSLSQGRAQFSMIFSHYDQVPSQVADIIKAKK.

The tr-type G domain maps to 8–283 (EHIRNIGICA…AVVDFLPSPI (276 aa)). GTP contacts are provided by residues 17–24 (AHIDAGKT), 81–85 (DTPGH), and 135–138 (NKMD).

Belongs to the TRAFAC class translation factor GTPase superfamily. Classic translation factor GTPase family. EF-G/EF-2 subfamily.

It is found in the cytoplasm. Functionally, catalyzes the GTP-dependent ribosomal translocation step during translation elongation. During this step, the ribosome changes from the pre-translocational (PRE) to the post-translocational (POST) state as the newly formed A-site-bound peptidyl-tRNA and P-site-bound deacylated tRNA move to the P and E sites, respectively. Catalyzes the coordinated movement of the two tRNA molecules, the mRNA and conformational changes in the ribosome. This Rickettsia conorii (strain ATCC VR-613 / Malish 7) protein is Elongation factor G.